The following is a 418-amino-acid chain: Glutamyl-tRNA reductase (418 aa).

Residues 49–52 (TCNR), S109, 114–116 (EPQ), and Q120 contribute to the substrate site. Catalysis depends on C50, which acts as the Nucleophile. 189 to 194 (GAGETI) contacts NADP(+).

The protein belongs to the glutamyl-tRNA reductase family. In terms of assembly, homodimer.

The enzyme catalyses (S)-4-amino-5-oxopentanoate + tRNA(Glu) + NADP(+) = L-glutamyl-tRNA(Glu) + NADPH + H(+). It participates in porphyrin-containing compound metabolism; protoporphyrin-IX biosynthesis; 5-aminolevulinate from L-glutamyl-tRNA(Glu): step 1/2. Its function is as follows. Catalyzes the NADPH-dependent reduction of glutamyl-tRNA(Glu) to glutamate 1-semialdehyde (GSA). This Klebsiella pneumoniae subsp. pneumoniae (strain ATCC 700721 / MGH 78578) protein is Glutamyl-tRNA reductase.